The following is a 113-amino-acid chain: Death-associated protein-like 1.L (113 aa).

The interval 1–57 (MAKEQKMQSSPQALKAGHLPAVKAGGMRVSKKQGNEENSAPEKNAKKTLQEKPSSVL) is disordered.

Belongs to the DAP-DAPL1 family. As to quaternary structure, associates with ribosomes; preventing translation. Interacts with eiF5a (eif5a and eif5a2); preventing translation.

Functionally, ribosome-binding protein that promotes ribosome hibernation, a process during which ribosomes are stabilized in an inactive state and preserved from proteasomal degradation. Acts via its association with eiF5a (eif5a and eif5a2) at the polypeptide exit tunnel of the ribosome, preventing mRNA translation. Plays a key role in ribosome hibernation in the mature egg by preventing mRNA translation, leading to ribosome inactivation. Ribosomes, which are produced in large quantities during oogenesis, are stored and translationally repressed in the egg and early embryo. The polypeptide is Death-associated protein-like 1.L (dapl1.L) (Xenopus laevis (African clawed frog)).